Here is a 346-residue protein sequence, read N- to C-terminus: Protease inhibitor Egf1.5b (346 aa).

The N-terminal stretch at 1–28 is a signal peptide; that stretch reads MYIDTGIMSNNIFLFAFFALVGLTRIEA. Residues 52–104 form the TIL domain; it reads CRENEHYNSTRIECEDECNDRNNKLCYRFQQFCWCNEGYIRNSSHICVKLEDC.

The protein belongs to the polydnaviridae EGF-like motif protein family. Interacts with host PAP1, PAP3 and SPH2.

In terms of biological role, counteracts the host humoral immune response by inhibiting the processing and the amidolytic activity of host PAP1 and PAP3. Thereby, melanization of host hemolymph, normally producing several reactive intermediates toxic for viruses, is deregulated and proper immune response cannot occur. The polypeptide is Protease inhibitor Egf1.5b (O5) (Microplitis demolitor (Parasitoid wasp)).